The primary structure comprises 327 residues: MHTFKDSLNITVSSGSGGAGCVSFLRERFKAKGGPDGGDGGRGGNVVFKVKPDLKTLSFYKNGQKLAANNGKPGMGSRKSGASGEDLVIFVPPNTRVYDVFTDSMLFELQNFDDEVIALKGGRGGLGNVNFKSSTKRTPRFAQPGESGTTLDLRLELVLIADIGLVGLPNAGKSSLISTITASRSKVGNYPFTTKVPHLGVLKSSYEDLVIADVPGIIEGASRGMGLGFEFLRHISKTKILVFLIDVASNDFMSTYSILVNELSVYDVGLSSKKRIIVANKLDLEGAIENFNQLKRALDGEKVLGISIYDNRGIDELVNELFALSRI.

The Obg domain occupies 2–160 (HTFKDSLNIT…LDLRLELVLI (159 aa)). The OBG-type G domain maps to 161–326 (ADIGLVGLPN…LVNELFALSR (166 aa)). Residues 167–174 (GLPNAGKS), 192–196 (FTTKV), 213–216 (DVPG), 280–283 (NKLD), and 307–309 (SIY) contribute to the GTP site. 2 residues coordinate Mg(2+): S174 and T194.

It belongs to the TRAFAC class OBG-HflX-like GTPase superfamily. OBG GTPase family. In terms of assembly, monomer. It depends on Mg(2+) as a cofactor.

It is found in the cytoplasm. In terms of biological role, an essential GTPase which binds GTP, GDP and possibly (p)ppGpp with moderate affinity, with high nucleotide exchange rates and a fairly low GTP hydrolysis rate. Plays a role in control of the cell cycle, stress response, ribosome biogenesis and in those bacteria that undergo differentiation, in morphogenesis control. This Borrelia turicatae (strain 91E135) protein is GTPase Obg.